The primary structure comprises 377 residues: Palmitoyltransferase PFA3 (377 aa).

At 1–31 the chain is on the cytoplasmic side; the sequence is MATNNNNNNGNPILRSLETSCCFLATLFPKV. A helical membrane pass occupies residues 32–52; it reads FCTLVLTWSLYVLLFIIPNYI. The Lumenal portion of the chain corresponds to 53-62; that stretch reads KSSLNSTILN. The chain crosses the membrane as a helical span at residues 63-83; it reads IIGITLYVLCIISYYKIILIG. Residues 84–181 are Cytoplasmic-facing; sequence PGSPLDYPEL…STCIGFHNYK (98 aa). A DHHC domain is found at 138–188; sequence RYCTKCSVWKPDRSHHCSSSGKCILKMDHYCPWFSTCIGFHNYKFFIQFLS. C168 serves as the catalytic S-palmitoyl cysteine intermediate. A helical membrane pass occupies residues 182-202; it reads FFIQFLSYVAIYCWFLFIISG. Topologically, residues 203–222 are lumenal; sequence KILYNFITEGLFEDEILSLN. The chain crosses the membrane as a helical span at residues 223–243; sequence LVAVLILSFAFAIAVSVFAMF. Topologically, residues 244-377 are cytoplasmic; the sequence is SIYLCCKNLT…LRRERQANIV (134 aa).

Belongs to the DHHC palmitoyltransferase family. PFA3 subfamily. Post-translationally, autopalmitoylated.

The protein localises to the vacuole membrane. It catalyses the reaction L-cysteinyl-[protein] + hexadecanoyl-CoA = S-hexadecanoyl-L-cysteinyl-[protein] + CoA. Functionally, palmitoyltransferase specific for VAC8. Palmitoylates VAC8 at one or more of its N-terminal cysteine residues, which is required for its proper membrane localization. The sequence is that of Palmitoyltransferase PFA3 (PFA3) from Candida albicans (strain SC5314 / ATCC MYA-2876) (Yeast).